We begin with the raw amino-acid sequence, 1201 residues long: Autophagy-related protein 11 (1201 aa).

Residues 90 to 109 (FPFLGRPSTPTKGSDNSTGT) form a disordered region. The segment covering 97-109 (STPTKGSDNSTGT) has biased composition (polar residues). A coiled-coil region spans residues 418-452 (LLRSDDMVRSLRDEKSKLEEKVKGSESRIRKLEDL). 2 disordered regions span residues 458 to 503 (HMGR…SEEK) and 525 to 545 (KLQKDAHAERQSNTDKIQEVQ). Residues 485-499 (RRSSVSSRRMSSNQS) show a composition bias toward low complexity. Positions 525 to 542 (KLQKDAHAERQSNTDKIQ) are enriched in basic and acidic residues. Coiled coils occupy residues 566 to 670 (RRFL…ALQA) and 710 to 828 (SAKA…WKER). 2 disordered regions span residues 1052–1076 (SMNGANPDRRSIGEASDGTSFDDEN) and 1115–1201 (DARG…LQGP). Residues 1133–1166 (RTLSKSLDSRRNSSNSKKGPATPSQRGNDSTTDL) are compositionally biased toward polar residues. The segment covering 1191–1201 (EEVRRDQLQGP) has biased composition (basic and acidic residues).

Belongs to the ATG11 family. In terms of assembly, homodimer and potential homooligomers.

It localises to the preautophagosomal structure membrane. Functionally, selective autophagy-specific protein required for pexophagy and mitophagy. In contrast to its Saccharomyces cerevisiae ATG11 ortholog, is not involved in non-selective autophagy nor in cytoplasm to vacuole transport (Cvt). This chain is Autophagy-related protein 11, found in Aspergillus oryzae (strain ATCC 42149 / RIB 40) (Yellow koji mold).